The chain runs to 143 residues: Transcriptional regulator MraZ (143 aa).

SpoVT-AbrB domains lie at 5–47 (EFLH…PMDE) and 76–119 (AIEC…ANDA).

It belongs to the MraZ family. In terms of assembly, forms oligomers.

Its subcellular location is the cytoplasm. It localises to the nucleoid. The sequence is that of Transcriptional regulator MraZ from Oceanobacillus iheyensis (strain DSM 14371 / CIP 107618 / JCM 11309 / KCTC 3954 / HTE831).